Reading from the N-terminus, the 311-residue chain is Aspartate carbamoyltransferase catalytic subunit (311 aa).

Residues Arg58 and Thr59 each coordinate carbamoyl phosphate. Residue Lys86 coordinates L-aspartate. Carbamoyl phosphate is bound by residues Arg108, His136, and Gln139. Positions 169 and 224 each coordinate L-aspartate. Gly265 and Pro266 together coordinate carbamoyl phosphate.

It belongs to the aspartate/ornithine carbamoyltransferase superfamily. ATCase family. Heterododecamer (2C3:3R2) of six catalytic PyrB chains organized as two trimers (C3), and six regulatory PyrI chains organized as three dimers (R2).

It catalyses the reaction carbamoyl phosphate + L-aspartate = N-carbamoyl-L-aspartate + phosphate + H(+). The protein operates within pyrimidine metabolism; UMP biosynthesis via de novo pathway; (S)-dihydroorotate from bicarbonate: step 2/3. In terms of biological role, catalyzes the condensation of carbamoyl phosphate and aspartate to form carbamoyl aspartate and inorganic phosphate, the committed step in the de novo pyrimidine nucleotide biosynthesis pathway. The protein is Aspartate carbamoyltransferase catalytic subunit of Geotalea daltonii (strain DSM 22248 / JCM 15807 / FRC-32) (Geobacter daltonii).